A 174-amino-acid chain; its full sequence is MTLILGIDPGSRITGYGVVRDTGRGCVYVASGCIRTGAGELPDRLQIVYRGVREVIQTYGPVTMGIEKVFMARNADSALKLGQARGAAIVAGAEEGLEIAEYTATQVKQAVAGTGGANKEQVQMMVMHLLKLTTKPQIDASDALAIAICHAHTRSSLLPHGLGTARSRGGRLRL.

Catalysis depends on residues Asp8, Glu67, and Asp139. Residues Asp8, Glu67, and Asp139 each coordinate Mg(2+).

This sequence belongs to the RuvC family. As to quaternary structure, homodimer which binds Holliday junction (HJ) DNA. The HJ becomes 2-fold symmetrical on binding to RuvC with unstacked arms; it has a different conformation from HJ DNA in complex with RuvA. In the full resolvosome a probable DNA-RuvA(4)-RuvB(12)-RuvC(2) complex forms which resolves the HJ. Requires Mg(2+) as cofactor.

It is found in the cytoplasm. It catalyses the reaction Endonucleolytic cleavage at a junction such as a reciprocal single-stranded crossover between two homologous DNA duplexes (Holliday junction).. The RuvA-RuvB-RuvC complex processes Holliday junction (HJ) DNA during genetic recombination and DNA repair. Endonuclease that resolves HJ intermediates. Cleaves cruciform DNA by making single-stranded nicks across the HJ at symmetrical positions within the homologous arms, yielding a 5'-phosphate and a 3'-hydroxyl group; requires a central core of homology in the junction. The consensus cleavage sequence is 5'-(A/T)TT(C/G)-3'. Cleavage occurs on the 3'-side of the TT dinucleotide at the point of strand exchange. HJ branch migration catalyzed by RuvA-RuvB allows RuvC to scan DNA until it finds its consensus sequence, where it cleaves and resolves the cruciform DNA. This Pseudomonas fluorescens (strain ATCC BAA-477 / NRRL B-23932 / Pf-5) protein is Crossover junction endodeoxyribonuclease RuvC.